The sequence spans 402 residues: L-threonine ammonia-lyase (402 aa).

Lysine 51 carries the N6-(pyridoxal phosphate)lysine modification. Pyridoxal 5'-phosphate contacts are provided by residues asparagine 78, 178–181, and serine 302; that span reads GGGL. The 76-residue stretch at 327–402 folds into the ACT domain; sequence KLKVELDDLP…GVGYLVDVLK (76 aa).

It belongs to the serine/threonine dehydratase family. Requires pyridoxal 5'-phosphate as cofactor.

It catalyses the reaction L-threonine = 2-oxobutanoate + NH4(+). The catalysed reaction is L-serine = pyruvate + NH4(+). It participates in amino-acid biosynthesis; L-isoleucine biosynthesis; 2-oxobutanoate from L-threonine: step 1/1. Catalyzes the conversion of threonine to 2-oxobutanoate and ammonia. Functions in the threonine-dependent pathway of isoleucine biosynthesis, which is the minor pathway for isoleucine biosynthesis in G.sulfurreducens. Also displays serine ammonia-lyase activity, yielding pyruvate from L-serine. The protein is L-threonine ammonia-lyase of Geobacter sulfurreducens (strain ATCC 51573 / DSM 12127 / PCA).